The sequence spans 238 residues: Putative ABC transporter ATP-binding protein AF_1841 (238 aa).

Positions 8–238 (IEADSVSYDY…EELLEKAGVI (231 aa)) constitute an ABC transporter domain. 41–48 (GANGSGKS) provides a ligand contact to ATP.

The protein belongs to the ABC transporter superfamily.

The protein localises to the cell membrane. Probably part of an ABC transporter complex. Responsible for energy coupling to the transport system. The polypeptide is Putative ABC transporter ATP-binding protein AF_1841 (Archaeoglobus fulgidus (strain ATCC 49558 / DSM 4304 / JCM 9628 / NBRC 100126 / VC-16)).